Consider the following 305-residue polypeptide: Coenzyme PQQ synthesis protein B (305 aa).

The protein belongs to the PqqB family.

Its pathway is cofactor biosynthesis; pyrroloquinoline quinone biosynthesis. Its function is as follows. May be involved in the transport of PQQ or its precursor to the periplasm. This Methylobacillus flagellatus (strain ATCC 51484 / DSM 6875 / VKM B-1610 / KT) protein is Coenzyme PQQ synthesis protein B.